Here is a 304-residue protein sequence, read N- to C-terminus: Histone H1.8 (304 aa).

The span at 1 to 24 (MAPGSVSSVSSSSFPSRDTSPSGS) shows a compositional bias: low complexity. Disordered stretches follow at residues 1–38 (MAPG…PSCR), 110–248 (SKAK…NSVA), and 270–304 (TVQE…NTQA). Positions 45 to 123 (RNPTMLHMVL…GATGSFKLVP (79 aa)) constitute an H15 domain. The segment covering 132–144 (APKAGRGAAGAKE) has biased composition (low complexity). Basic and acidic residues-rich tracts occupy residues 153-166 (LKKD…MEKG), 189-202 (KPKE…KQDK), and 225-237 (ANAH…EKSK). The Nuclear localization signal signature appears at 154–170 (KKDQVGKATMEKGQKRR). The segment covering 270 to 281 (TVQETKVPTPSQ) has biased composition (polar residues).

This sequence belongs to the histone H1/H5 family. In terms of tissue distribution, oocyte-specific.

Its subcellular location is the cytoplasm. The protein resides in the nucleus. It is found in the chromosome. In terms of biological role, may play a key role in the control of gene expression during oogenesis and early embryogenesis, presumably through the perturbation of chromatin structure. Essential for meiotic maturation of germinal vesicle-stage oocytes. The somatic type linker histone H1c is rapidly replaced by H1oo in a donor nucleus transplanted into an oocyte. The greater mobility of H1oo as compared to H1c may contribute to this rapid replacement and increased instability of the embryonic chromatin structure. The rapid replacement of H1c with H1oo may play an important role in nuclear remodeling. The sequence is that of Histone H1.8 from Mus musculus (Mouse).